The primary structure comprises 69 residues: Putative membrane protein insertion efficiency factor (69 aa).

The protein belongs to the UPF0161 family.

The protein localises to the cell membrane. Could be involved in insertion of integral membrane proteins into the membrane. The sequence is that of Putative membrane protein insertion efficiency factor from Clostridium botulinum (strain Okra / Type B1).